A 148-amino-acid polypeptide reads, in one-letter code: uncharacterized protein (148 aa).

An ABC transmembrane type-1 domain is found at 25 to 148 (LSIGLIFSLI…YSITNIFIYN (124 aa)). A run of 3 helical transmembrane segments spans residues 26–46 (SIGL…PLII), 60–80 (IVII…STYI), and 127–147 (ITRV…IFIY).

The protein resides in the cell membrane. This is an uncharacterized protein from Staphylococcus epidermidis.